The sequence spans 85 residues: Protein MC005 (85 aa).

Interacts with host IKBKG; this interaction prevents NF-kappa-B activation.

The protein localises to the host cytoplasm. Its function is as follows. Plays a role in the inhibition of the host NF-kappa-B pathway by preventing ubiquitin binding-dependent regulation of host IKBKB activation by IKBKG/NEMO. This chain is Protein MC005 (MC005L), found in Molluscum contagiosum virus subtype 1 (MOCV).